The chain runs to 467 residues: ATP-dependent protease ATPase subunit HslU (467 aa).

ATP contacts are provided by residues V22 and 64–69; that span reads GVGKTE. A disordered region spans residues 149 to 192; that stretch reads QTNNPLESLFGGAIPNFGQNNEDEEEPPTEEIKTKRSEIKRQLE. The span at 178-192 shows a compositional bias: basic and acidic residues; sequence EEIKTKRSEIKRQLE. The ATP site is built by D280, E345, and R417.

This sequence belongs to the ClpX chaperone family. HslU subfamily. A double ring-shaped homohexamer of HslV is capped on each side by a ring-shaped HslU homohexamer. The assembly of the HslU/HslV complex is dependent on binding of ATP.

Its subcellular location is the cytoplasm. In terms of biological role, ATPase subunit of a proteasome-like degradation complex; this subunit has chaperone activity. The binding of ATP and its subsequent hydrolysis by HslU are essential for unfolding of protein substrates subsequently hydrolyzed by HslV. HslU recognizes the N-terminal part of its protein substrates and unfolds these before they are guided to HslV for hydrolysis. The sequence is that of ATP-dependent protease ATPase subunit HslU from Staphylococcus aureus (strain MRSA252).